Consider the following 27-residue polypeptide: CD59 glycoprotein (27 aa).

2 disulfide bridges follow: Cys-3–Cys-25 and Cys-6–Cys-12. Asn-17 carries N-linked (GlcNAc...) asparagine glycosylation.

In terms of assembly, interacts with T-cell surface antigen CD2. In terms of processing, N- and O-glycosylated. Expressed in erythrocytes and lymphocytes. Not detected in platelets.

It localises to the cell membrane. Its subcellular location is the secreted. Its function is as follows. Potent inhibitor of the complement membrane attack complex (MAC) action, which protects self-cells from damage during complement activation. Acts by binding to the beta-haipins of C8 (C8A and C8B) components of the assembling MAC, forming an intermolecular beta-sheet that prevents incorporation of the multiple copies of C9 required for complete formation of the osmolytic pore. This is CD59 glycoprotein from Ovis aries (Sheep).